An 851-amino-acid chain; its full sequence is MNYVGQLAETVFGTVKELYRGLNPATLSGGIDVLVVKQVDGSFRCSPFHVRFGKLGVLRSREKVVDIELNGEPVDLHMKLGDSGEAFFVQELESDDEHVPPGLCTSPIPWGGLSGFPSDSQLGTASEPEGLVMAGTASTGRRKRRRRRKPKQKEDAVATDSSPEELEAGAESELSLPEKLRPEPPGVQLEEKSSLQPKDIYPYSDGEWPPQASLSAGELTSPKSDSELEVRTPEPSPLRAESHMQWAWGRLPKVARAERPESSVVLEGRAGATSPPRGGPSTPSTSVAGGVDPLGLPIQQTEAGADLQPDTEDPTLVGPPLHTPETEESKTQSSGDMGLPPASKSWSWATLEVPVPTGQPERVSRGKGSPKRSQHLGPSDIYLDDLPSLDSENAALYFPQSDSGLGARRWSEPSSQKSLRDPNPEHEPEPTLDTVDTIALSLCGGLADSRDISLEKFNQHSVSYQDLTKNPGLLDDPNLVVKINGKHYNWAVAAPMILSLQAFQKNLPKSTMDKLEREKMPRKGGRWWFSWRRRDFLAEERSAQKEKTAAKEQQGEKTEVLSSDDDAPDSPVILEIPSLPPSTPPSTPTYKKSLRLSSDQIRRLNLQEGANDVVFSVTTQYQGTCRCKATIYLWKWDDKVVISDIDGTITKSDALGHILPQLGKDWTHQGITSLYHKIQLNGYKFLYCSARAIGMADLTKGYLQWVSEGGCSLPKGPILLSPSSLFSALHREVIEKKPEVFKVACLSDIQQLFLPHGQPFYAAFGNRPNDVFAYRQVGLPESRIFTVNPRGELIQELIKNHKSTYERLGEVVELLFPPVARGPSTDLANPEYSNFCYWREPLPAVDLDTLD.

Positions 1 to 108 (MNYVGQLAET…VPPGLCTSPI (108 aa)) are N-LIP. 2 disordered regions span residues 114-385 (SGFP…YLDD) and 400-432 (QSDS…EPTL). Positions 140-151 (GRRKRRRRRKPK) are enriched in basic residues. Positions 141–148 (RRKRRRRR) match the Nuclear localization signal motif. Phosphothreonine is present on Thr159. Phosphoserine is present on residues Ser161, Ser162, and Ser224. The segment covering 268–286 (GRAGATSPPRGGPSTPSTS) has biased composition (low complexity). Over residues 418–429 (SLRDPNPEHEPE) the composition is skewed to basic and acidic residues. Ser463 is modified (phosphoserine). Basic and acidic residues predominate over residues 542–559 (SAQKEKTAAKEQQGEKTE). Residues 542-591 (SAQKEKTAAKEQQGEKTEVLSSDDDAPDSPVILEIPSLPPSTPPSTPTYK) are disordered. Positions 578–587 (SLPPSTPPST) are enriched in pro residues. Residues 590 to 792 (YKKSLRLSSD…RIFTVNPRGE (203 aa)) form a C-LIP region. The short motif at 644 to 648 (DIDGT) is the DXDXT motif element. Residues 655-659 (LGHIL) carry the LXXIL motif motif.

It belongs to the lipin family. Mg(2+) is required as a cofactor. In terms of tissue distribution, significant expression in intestine and other regions of the gastrointestinal tract.

It is found in the nucleus. The catalysed reaction is a 1,2-diacyl-sn-glycero-3-phosphate + H2O = a 1,2-diacyl-sn-glycerol + phosphate. With respect to regulation, inhibited by N-ethylmaleimide. In terms of biological role, magnesium-dependent phosphatidate phosphatase enzyme which catalyzes the conversion of phosphatidic acid to diacylglycerol during triglyceride, phosphatidylcholine and phosphatidylethanolamine biosynthesis therefore regulates fatty acid metabolism. This chain is Phosphatidate phosphatase LPIN3, found in Homo sapiens (Human).